A 503-amino-acid polypeptide reads, in one-letter code: Aspartyl/glutamyl-tRNA(Asn/Gln) amidotransferase subunit B (503 aa).

This sequence belongs to the GatB/GatE family. GatB subfamily. In terms of assembly, heterotrimer of A, B and C subunits.

It carries out the reaction L-glutamyl-tRNA(Gln) + L-glutamine + ATP + H2O = L-glutaminyl-tRNA(Gln) + L-glutamate + ADP + phosphate + H(+). The enzyme catalyses L-aspartyl-tRNA(Asn) + L-glutamine + ATP + H2O = L-asparaginyl-tRNA(Asn) + L-glutamate + ADP + phosphate + 2 H(+). In terms of biological role, allows the formation of correctly charged Asn-tRNA(Asn) or Gln-tRNA(Gln) through the transamidation of misacylated Asp-tRNA(Asn) or Glu-tRNA(Gln) in organisms which lack either or both of asparaginyl-tRNA or glutaminyl-tRNA synthetases. The reaction takes place in the presence of glutamine and ATP through an activated phospho-Asp-tRNA(Asn) or phospho-Glu-tRNA(Gln). This is Aspartyl/glutamyl-tRNA(Asn/Gln) amidotransferase subunit B from Roseobacter denitrificans (strain ATCC 33942 / OCh 114) (Erythrobacter sp. (strain OCh 114)).